A 427-amino-acid polypeptide reads, in one-letter code: Adenylosuccinate synthetase (427 aa).

GTP-binding positions include 11-17 (GDEGKGK) and 39-41 (GHT). The active-site Proton acceptor is D12. Residues D12 and G39 each coordinate Mg(2+). Residues 12–15 (DEGK), 37–40 (NAGH), T132, R146, Q223, T238, and R302 each bind IMP. H40 (proton donor) is an active-site residue. 298-304 (TTTGRPR) is a substrate binding site. GTP contacts are provided by residues R304, 330-332 (KLD), and 412-414 (GVG).

It belongs to the adenylosuccinate synthetase family. As to quaternary structure, homodimer. Mg(2+) is required as a cofactor.

It localises to the cytoplasm. The enzyme catalyses IMP + L-aspartate + GTP = N(6)-(1,2-dicarboxyethyl)-AMP + GDP + phosphate + 2 H(+). Its pathway is purine metabolism; AMP biosynthesis via de novo pathway; AMP from IMP: step 1/2. In terms of biological role, plays an important role in the de novo pathway and in the salvage pathway of purine nucleotide biosynthesis. Catalyzes the first committed step in the biosynthesis of AMP from IMP. This is Adenylosuccinate synthetase (purA) from Dictyostelium discoideum (Social amoeba).